The sequence spans 872 residues: Alanine--tRNA ligase (872 aa).

Residues His567, His571, Cys669, and His673 each coordinate Zn(2+).

The protein belongs to the class-II aminoacyl-tRNA synthetase family. The cofactor is Zn(2+).

Its subcellular location is the cytoplasm. The enzyme catalyses tRNA(Ala) + L-alanine + ATP = L-alanyl-tRNA(Ala) + AMP + diphosphate. Functionally, catalyzes the attachment of alanine to tRNA(Ala) in a two-step reaction: alanine is first activated by ATP to form Ala-AMP and then transferred to the acceptor end of tRNA(Ala). Also edits incorrectly charged Ser-tRNA(Ala) and Gly-tRNA(Ala) via its editing domain. This Streptococcus thermophilus (strain ATCC BAA-491 / LMD-9) protein is Alanine--tRNA ligase.